A 578-amino-acid chain; its full sequence is Endonuclease GajA (578 aa).

The tract at residues 1–341 (MKFSNITIKN…RLIRVHSTEK (341 aa)) is ATPase domain. 32 to 36 (DIGKT) is a binding site for ATP. The segment at 370-510 (LFAERVLLIE…LGERIYLSEI (141 aa)) is toprim domain. Residues Glu379, Glu383, Asp463, Glu464, and Glu513 each coordinate a divalent metal cation.

Homotetramer. Forms the core of the anti-phage defense complex. Interacts with GajB; 2 GajB dimers dock at opposite sides of the GajA complex to form a 4:4 GajA-GajB assembly (GajAB). GajAB interacts with Bacillus phage Phi3T Gad1 protein; this interaction forms a 4:4:8 GajAB-Gad1 complex and leads to GajAB inhibition. The cofactor is Mg(2+). Mn(2+) serves as cofactor.

Its activity is regulated as follows. Endonuclease activity inhibited by all NTPs, dNTPs, NDPs (at 0.5 mM, UDP not tested) and AMP-PNP; not inhibited by any tested NMP, dNMP or nucleoside. Inhibited by 100 mM NaCl, 100 mM KCl, 0.5 mM Co(2+) and 0.5 mM Ni(2+). Functionally, component of antiviral defense system Gabija type I, composed of GajA and GajB. Endonuclease that nicks double-stranded DNA within the sequence 5'-TNNNCGGGNNA-3' in the absence of nucleotides (NTP, dNTP and NDPs), cleaving after C-1. Has no detected ATPase activity. Expression of Gabija type I in B.subtilis (strain BEST7003) confers resistance to phages phi105, phi29, rho14, SpBeta and SBSphiC. Expression of Gabija type I in E.coli B (strain ATCC 11303) confers resistance to phage T7. It is thought that this enzyme is strongly suppressed during physiological growth (in E.coli total nucleotide concentration is over 8.7 mM in mid-log phase), but during viral replication, when nucleotides are rapidly consumed, it is de-suppressed and degrades target DNA. The chain is Endonuclease GajA from Bacillus cereus (strain VD045).